A 473-amino-acid chain; its full sequence is Protein translocase subunit SecA (473 aa).

Asp-127 serves as a coordination point for ATP. Residues 424 to 447 (VAEGKAVHQDTSKQEPKKKQPIRK) form a disordered region. Positions 457, 459, 468, and 469 each coordinate Zn(2+).

It belongs to the SecA family. As to quaternary structure, monomer and homodimer. Part of the essential Sec protein translocation apparatus which comprises SecA, SecYEG and auxiliary proteins SecDF. Other proteins may also be involved. It depends on Zn(2+) as a cofactor.

The protein resides in the cell membrane. Its subcellular location is the cytoplasm. It carries out the reaction ATP + H2O + cellular proteinSide 1 = ADP + phosphate + cellular proteinSide 2.. Its function is as follows. Part of the Sec protein translocase complex. Interacts with the SecYEG preprotein conducting channel. Has a central role in coupling the hydrolysis of ATP to the transfer of proteins into and across the cell membrane, serving as an ATP-driven molecular motor driving the stepwise translocation of polypeptide chains across the membrane. This is Protein translocase subunit SecA from Cytobacillus firmus (Bacillus firmus).